Here is a 47-residue protein sequence, read N- to C-terminus: Gene 60 protein (47 aa).

The sequence is that of Gene 60 protein (60) from Mycobacterium phage L5 (Mycobacteriophage L5).